The sequence spans 487 residues: L-tartrate/succinate antiporter (487 aa).

The next 14 helical transmembrane spans lie at 10–30 (YLAP…AGLE), 33–53 (TWLY…EPVP), 54–74 (GAVV…WLLF), 93–113 (WAVS…FMFG), 137–157 (TLFL…VTPS), 189–209 (IGSY…AIFL), 236–256 (FLGM…LAYV), 292–312 (LIVG…AAMV), 313–333 (GYSV…DIVS), 340–360 (VFFW…TGFI), 370–390 (SLSG…FYLL), 393–413 (FFAS…AAAL), 418–438 (IPLP…SILT), and 465–485 (IFGL…MPVV).

Belongs to the SLC13A/DASS transporter (TC 2.A.47) family. DIT1 subfamily.

The protein localises to the cell inner membrane. The enzyme catalyses (2R,3R)-tartrate(out) + succinate(in) = (2R,3R)-tartrate(in) + succinate(out). Functionally, catalyzes the uptake of tartrate in exchange for intracellular succinate. Essential for anaerobic L-tartrate fermentation. The polypeptide is L-tartrate/succinate antiporter (ttdT) (Shigella sonnei (strain Ss046)).